A 171-amino-acid chain; its full sequence is Moubatin (171 aa).

The first 15 residues, 1 to 15, serve as a signal peptide directing secretion; it reads MMLVLTTLIFSFSAS. Disulfide bonds link C23-C144, C55-C166, and C118-C145.

It belongs to the calycin superfamily. Lipocalin family. Post-translationally, the N-terminus is blocked. As to expression, expressed in salivary glands.

Its subcellular location is the secreted. Tick salivary platelet aggregation inhibitor that plays an important part in the anti-hemostatic strategy of ticks. Acts by scavenging thromboxane A2 (TXA2), a potent inducer of platelet aggregation and blood vessel constriction. As a consequence, is a specific inhibitor of collagen-induced platelet aggregation. In addition, it also acts as a potent inhibitor of TXA2-mediated vasoconstriction. Has also been found to bind leukotriene B4 (LTB4) (which also derives from arachidonic acid, as TXA2) with affinities in the nanomolar range. It does not interact with complement protein C5. The chain is Moubatin from Ornithodoros moubata (Soft tick).